We begin with the raw amino-acid sequence, 494 residues long: Anthranilate synthase component 1 (494 aa).

L-tryptophan is bound by residues Ser52 and 274 to 276 (PYM). 309–310 (GT) serves as a coordination point for chorismate. Mg(2+) is bound at residue Glu336. Chorismate contacts are provided by residues Tyr424, Arg444, 458-460 (GAG), and Gly460. Position 473 (Glu473) interacts with Mg(2+).

Belongs to the anthranilate synthase component I family. In terms of assembly, heterotetramer consisting of two non-identical subunits: a beta subunit (TrpG) and a large alpha subunit (TrpE). It depends on Mg(2+) as a cofactor.

It carries out the reaction chorismate + L-glutamine = anthranilate + pyruvate + L-glutamate + H(+). The protein operates within amino-acid biosynthesis; L-tryptophan biosynthesis; L-tryptophan from chorismate: step 1/5. Its activity is regulated as follows. Feedback inhibited by tryptophan. Its function is as follows. Part of a heterotetrameric complex that catalyzes the two-step biosynthesis of anthranilate, an intermediate in the biosynthesis of L-tryptophan. In the first step, the glutamine-binding beta subunit (TrpG) of anthranilate synthase (AS) provides the glutamine amidotransferase activity which generates ammonia as a substrate that, along with chorismate, is used in the second step, catalyzed by the large alpha subunit of AS (TrpE) to produce anthranilate. In the absence of TrpG, TrpE can synthesize anthranilate directly from chorismate and high concentrations of ammonia. This Aquifex aeolicus (strain VF5) protein is Anthranilate synthase component 1 (trpE).